Reading from the N-terminus, the 269-residue chain is tRNA pseudouridine synthase A (269 aa).

The active-site Nucleophile is the D51. Y109 is a substrate binding site.

The protein belongs to the tRNA pseudouridine synthase TruA family. Homodimer.

It catalyses the reaction uridine(38/39/40) in tRNA = pseudouridine(38/39/40) in tRNA. Functionally, formation of pseudouridine at positions 38, 39 and 40 in the anticodon stem and loop of transfer RNAs. The protein is tRNA pseudouridine synthase A of Histophilus somni (strain 129Pt) (Haemophilus somnus).